Consider the following 426-residue polypeptide: Histidine--tRNA ligase (426 aa).

This sequence belongs to the class-II aminoacyl-tRNA synthetase family.

It localises to the cytoplasm. The catalysed reaction is tRNA(His) + L-histidine + ATP = L-histidyl-tRNA(His) + AMP + diphosphate + H(+). The protein is Histidine--tRNA ligase (hisS) of Thermoplasma volcanium (strain ATCC 51530 / DSM 4299 / JCM 9571 / NBRC 15438 / GSS1).